We begin with the raw amino-acid sequence, 245 residues long: 1-(5-phosphoribosyl)-5-[(5-phosphoribosylamino)methylideneamino] imidazole-4-carboxamide isomerase (245 aa).

D7 (proton acceptor) is an active-site residue. The active-site Proton donor is D129.

Belongs to the HisA/HisF family.

The protein localises to the cytoplasm. The enzyme catalyses 1-(5-phospho-beta-D-ribosyl)-5-[(5-phospho-beta-D-ribosylamino)methylideneamino]imidazole-4-carboxamide = 5-[(5-phospho-1-deoxy-D-ribulos-1-ylimino)methylamino]-1-(5-phospho-beta-D-ribosyl)imidazole-4-carboxamide. It participates in amino-acid biosynthesis; L-histidine biosynthesis; L-histidine from 5-phospho-alpha-D-ribose 1-diphosphate: step 4/9. The sequence is that of 1-(5-phosphoribosyl)-5-[(5-phosphoribosylamino)methylideneamino] imidazole-4-carboxamide isomerase from Shewanella baltica (strain OS195).